The primary structure comprises 95 residues: Small ubiquitin-related modifier 4 (95 aa).

The Ubiquitin-like domain occupies 17-95 (HINLKVAGQD…VLQQQTGGVY (79 aa)). Residue Gly93 forms a Glycyl lysine isopeptide (Gly-Lys) (interchain with K-? in acceptor proteins) linkage. Residues 94 to 95 (VY) constitute a propeptide that is removed on maturation.

This sequence belongs to the ubiquitin family. SUMO subfamily. In terms of assembly, interacts with SAE2. Covalently attached to a number of proteins.

Its function is as follows. Ubiquitin-like protein which can be covalently attached to target lysines as a monomer. Does not seem to be involved in protein degradation and may modulate protein subcellular localization, stability or activity. Upon oxidative stress, conjugates to various anti-oxidant enzymes, chaperones, and stress defense proteins. May also conjugate to NFKBIA, TFAP2A and FOS, negatively regulating their transcriptional activity, and to NR3C1, positively regulating its transcriptional activity. Covalent attachment to its substrates requires prior activation by the E1 complex SAE1-SAE2 and linkage to the E2 enzyme UBE2I. The polypeptide is Small ubiquitin-related modifier 4 (SUMO4) (Sus scrofa (Pig)).